Consider the following 427-residue polypeptide: Endothelin-1 receptor (427 aa).

The first 20 residues, 1 to 20 (METFWLRVSFWVALVGGVIS), serve as a signal peptide directing secretion. Residues 21 to 80 (DNPESYSTNLSIHVDSVTTFRGTELSFVVTTHQPTNLALPSNGSMHNYCPQQTKITSAFK) lie on the Extracellular side of the membrane. N-linked (GlcNAc...) asparagine glycosylation is found at Asn-29 and Asn-62. A helical membrane pass occupies residues 81 to 102 (YINTVISCTIFIVGMVGNATLL). The Cytoplasmic segment spans residues 103–112 (RIIYQNKCMR). Residues 113 to 132 (NGPNALIASLALGDLIYVVI) form a helical membrane-spanning segment. Over 133–159 (DLPINVFKLLAGRWPFEQNDFGVFLCK) the chain is Extracellular. Cys-158 and Cys-239 are disulfide-bonded. A helical transmembrane segment spans residues 160 to 181 (LFPFLQKSSVGITVLNLCALSV). At 182–205 (DRYRAVASWSRVQGIGIPLVTAIE) the chain is on the cytoplasmic side. Residues 206-229 (IVSIWILSFILAIPEAIGFVMVPF) traverse the membrane as a helical segment. The Extracellular portion of the chain corresponds to 230-256 (EYKGAQHRTCMLNATSKFMEFYQDVKD). A helical transmembrane segment spans residues 257–278 (WWLFGFYFCMPLVCTAIFYTLM). Over 279–306 (TCEMLNRRNGSLRIALSEHLKQRREVAK) the chain is Cytoplasmic. The chain crosses the membrane as a helical span at residues 307–328 (TVFCLVVIFALCWFPLHLSRIL). Over 329–347 (KKTVYDEMDTNRCELLSFL) the chain is Extracellular. A helical transmembrane segment spans residues 348–372 (LLMDYIGINLATMNSCINPIALYFV). The Cytoplasmic portion of the chain corresponds to 373–427 (SKKFKNCFQSCLCCCCYQSKSLMTSVPMNGTSIQWKNPEQNNHNTERSSHKDSIN). Positions 405–415 (IQWKNPEQNNH) are enriched in polar residues. The tract at residues 405–427 (IQWKNPEQNNHNTERSSHKDSIN) is disordered. A compositionally biased stretch (basic and acidic residues) spans 416 to 427 (NTERSSHKDSIN). Ser-425 bears the Phosphoserine mark.

This sequence belongs to the G-protein coupled receptor 1 family. Endothelin receptor subfamily. EDNRA sub-subfamily. As to quaternary structure, interacts with HDAC7 and KAT5.

The protein resides in the cell membrane. Receptor for endothelin-1. Mediates its action by association with G proteins that activate a phosphatidylinositol-calcium second messenger system. The rank order of binding affinities for ET-A is: ET1 &gt; ET2 &gt;&gt; ET3. In Ovis aries (Sheep), this protein is Endothelin-1 receptor.